Reading from the N-terminus, the 274-residue chain is Protein STAY-GREEN, chloroplastic (274 aa).

The transit peptide at 1 to 48 directs the protein to the chloroplast; the sequence is MAAATSTMSLLPPITQQQRWHAADSLVVLASRCHNSRRRRRCRYVVPR.

This sequence belongs to the staygreen family. In terms of assembly, interacts with LHCII complex. In terms of tissue distribution, expressed in leaves, roots and developing seeds.

The protein localises to the plastid. Its subcellular location is the chloroplast membrane. It localises to the chloroplast stroma. Functionally, involved in the disassembling mechanism of the intact light-harvesting complex of photosystem II (LHCII) in the thylakoid membranes. Required to trigger chlorophyll degradation during natural and dark-induced leaf senescence. The polypeptide is Protein STAY-GREEN, chloroplastic (SGR) (Oryza sativa subsp. japonica (Rice)).